The following is a 429-amino-acid chain: Ribosomal RNA small subunit methyltransferase B (429 aa).

S-adenosyl-L-methionine-binding positions include 254-260 (CAAPGGK), Asp277, Asp303, and Asp322. Residue Cys375 is the Nucleophile of the active site. Positions 397-419 (ALSETGTPDQPGQQNLPGGEEGD) are disordered. Positions 400-412 (ETGTPDQPGQQNL) are enriched in polar residues.

This sequence belongs to the class I-like SAM-binding methyltransferase superfamily. RsmB/NOP family.

The protein localises to the cytoplasm. It carries out the reaction cytidine(967) in 16S rRNA + S-adenosyl-L-methionine = 5-methylcytidine(967) in 16S rRNA + S-adenosyl-L-homocysteine + H(+). Its function is as follows. Specifically methylates the cytosine at position 967 (m5C967) of 16S rRNA. In Salmonella paratyphi A (strain ATCC 9150 / SARB42), this protein is Ribosomal RNA small subunit methyltransferase B.